A 250-amino-acid polypeptide reads, in one-letter code: Eukaryotic translation initiation factor 3 subunit K (250 aa).

Positions 54–235 (YDLFGNLAIL…DVKAGVVKEN (182 aa)) constitute a PCI domain.

The protein belongs to the eIF-3 subunit K family. As to quaternary structure, component of the eukaryotic translation initiation factor 3 (eIF-3) complex.

It is found in the cytoplasm. Functionally, component of the eukaryotic translation initiation factor 3 (eIF-3) complex, which is involved in protein synthesis of a specialized repertoire of mRNAs and, together with other initiation factors, stimulates binding of mRNA and methionyl-tRNAi to the 40S ribosome. The eIF-3 complex specifically targets and initiates translation of a subset of mRNAs involved in cell proliferation. The sequence is that of Eukaryotic translation initiation factor 3 subunit K from Cryptococcus neoformans var. neoformans serotype D (strain B-3501A) (Filobasidiella neoformans).